Reading from the N-terminus, the 237-residue chain is ATP synthase subunit a (237 aa).

The next 5 membrane-spanning stretches (helical) occupy residues 18-38 (LTLLAMSLLAVLLVFAFVYWA), 77-97 (SLFLFSLFLFLVVANNLGLMA), 114-134 (NIAFDLSMSFLITLICHVEGI), 167-187 (LALRIYGNIFAGEVLSGLLVT), and 208-230 (AFSVFISCVQAYVFTMLTSMYLG).

The protein belongs to the ATPase A chain family. In terms of assembly, F-type ATPases have 2 components, CF(1) - the catalytic core - and CF(0) - the membrane proton channel. CF(1) has five subunits: alpha(3), beta(3), gamma(1), delta(1), epsilon(1). CF(0) has three main subunits: a(1), b(2) and c(9-12). The alpha and beta chains form an alternating ring which encloses part of the gamma chain. CF(1) is attached to CF(0) by a central stalk formed by the gamma and epsilon chains, while a peripheral stalk is formed by the delta and b chains.

The protein localises to the cell membrane. Functionally, key component of the proton channel; it plays a direct role in the translocation of protons across the membrane. The protein is ATP synthase subunit a of Streptococcus gordonii (strain Challis / ATCC 35105 / BCRC 15272 / CH1 / DL1 / V288).